The sequence spans 404 residues: Druantia protein DruA (404 aa).

Its subcellular location is the cytoplasm. Its function is as follows. Component of antiviral defense system Druantia type I, composed of DruA, DruB, DruC, DruD and DruE. Expression of Druantia in E.coli (strain MG1655) confers resistance to phage lambda, SECphi18, SECphi27 and T4. The protein is Druantia protein DruA of Escherichia coli (strain UMEA 4076-1).